The sequence spans 401 residues: tRNA(Ile)-lysidine synthase (401 aa).

17-22 (SGGPDS) contributes to the ATP binding site.

It belongs to the tRNA(Ile)-lysidine synthase family.

Its subcellular location is the cytoplasm. The enzyme catalyses cytidine(34) in tRNA(Ile2) + L-lysine + ATP = lysidine(34) in tRNA(Ile2) + AMP + diphosphate + H(+). Functionally, ligates lysine onto the cytidine present at position 34 of the AUA codon-specific tRNA(Ile) that contains the anticodon CAU, in an ATP-dependent manner. Cytidine is converted to lysidine, thus changing the amino acid specificity of the tRNA from methionine to isoleucine. This chain is tRNA(Ile)-lysidine synthase, found in Mycoplasma mycoides subsp. mycoides SC (strain CCUG 32753 / NCTC 10114 / PG1).